The primary structure comprises 351 residues: MSQQPATTSRAELVSSAVEFLLDQSIADSPLAKKVEFLESKGLTQQEIEEALQKARTGTVQASPSQQSVVPPRPPVPDYYPSAPPLPERDWKDYFIMATATAGISYGVYQFVKRYVVPKILPPSKTQLEQDKAAIDHEFQRVESLLEKFEADQKEFYQKQEAKSKKIDETLQEVDEIINKTNEKNLNNEETLKYLKLEIENIKTTLLKTLDSQKATLNAELSAMEKQLQDIKFDIKTSGIAVAPQLSTPPSESTSRQSPAAEAKPKINLNIPPTTSIPSLRDVLSREKDKDVNSDSIAQYEQRTANEKDVERSIPAWQLSASNGGSSTTSGVAGDEQKEPKRGIPAWQLNA.

The segment at 54–75 (KARTGTVQASPSQQSVVPPRPP) is disordered. Residues 60 to 70 (VQASPSQQSVV) show a composition bias toward low complexity. Positions 83 to 91 (APPLPERDW) match the SH3-binding motif. A disordered region spans residues 243–351 (APQLSTPPSE…RGIPAWQLNA (109 aa)). Positions 245 to 258 (QLSTPPSESTSRQS) are enriched in polar residues. A compositionally biased stretch (basic and acidic residues) spans 283–293 (VLSREKDKDVN). Residues 294–303 (SDSIAQYEQR) show a composition bias toward polar residues. Positions 320–334 (SASNGGSSTTSGVAG) are enriched in low complexity.

Belongs to the peroxin-14 family. Interacts with PEX13 (via SH3 domain); forming the PEX13-PEX14 docking complex. Interacts with PEX5 (via WxxxF/Y motifs).

The protein resides in the peroxisome membrane. Functionally, component of the PEX13-PEX14 docking complex, a translocon channel that specifically mediates the import of peroxisomal cargo proteins bound to PEX5 receptor. The PEX13-PEX14 docking complex forms a large import pore which can be opened to a diameter of about 9 nm. Mechanistically, PEX5 receptor along with cargo proteins associates with the PEX14 subunit of the PEX13-PEX14 docking complex in the cytosol, leading to the insertion of the receptor into the organelle membrane with the concomitant translocation of the cargo into the peroxisome matrix. The chain is Peroxisomal membrane protein PEX14 from Pichia angusta (Yeast).